We begin with the raw amino-acid sequence, 36 residues long: MMNLLSGWFYILMFYIGVNFPYWMGWSTTAFGFYTP.

This is an uncharacterized protein from Enterobacteria phage T4 (Bacteriophage T4).